We begin with the raw amino-acid sequence, 159 residues long: Phosphopantetheine adenylyltransferase (159 aa).

Belongs to the eukaryotic CoaD family.

It is found in the cytoplasm. It catalyses the reaction (R)-4'-phosphopantetheine + ATP + H(+) = 3'-dephospho-CoA + diphosphate. It participates in cofactor biosynthesis; coenzyme A biosynthesis. Functionally, reversibly transfers an adenylyl group from ATP to 4'-phosphopantetheine, yielding dephospho-CoA (dPCoA) and pyrophosphate. This Thermococcus gammatolerans (strain DSM 15229 / JCM 11827 / EJ3) protein is Phosphopantetheine adenylyltransferase.